The chain runs to 708 residues: DNA ligase (708 aa).

Residues 35–39 (DADYD), 84–85 (SL), and Glu118 each bind NAD(+). The active-site N6-AMP-lysine intermediate is Lys120. NAD(+)-binding residues include Arg141, Glu182, Lys303, and Lys327. Zn(2+) contacts are provided by Cys419, Cys422, Cys437, and Cys443. The BRCT domain maps to 628–708 (TRASEVSGKT…GWAKIVADAQ (81 aa)).

This sequence belongs to the NAD-dependent DNA ligase family. LigA subfamily. Mg(2+) is required as a cofactor. It depends on Mn(2+) as a cofactor.

The enzyme catalyses NAD(+) + (deoxyribonucleotide)n-3'-hydroxyl + 5'-phospho-(deoxyribonucleotide)m = (deoxyribonucleotide)n+m + AMP + beta-nicotinamide D-nucleotide.. DNA ligase that catalyzes the formation of phosphodiester linkages between 5'-phosphoryl and 3'-hydroxyl groups in double-stranded DNA using NAD as a coenzyme and as the energy source for the reaction. It is essential for DNA replication and repair of damaged DNA. This chain is DNA ligase, found in Rhizorhabdus wittichii (strain DSM 6014 / CCUG 31198 / JCM 15750 / NBRC 105917 / EY 4224 / RW1) (Sphingomonas wittichii).